Consider the following 581-residue polypeptide: Arginine--tRNA ligase (581 aa).

The short motif at 126-136 (PNLAKEMHVGH) is the 'HIGH' region element.

Belongs to the class-I aminoacyl-tRNA synthetase family. As to quaternary structure, monomer.

Its subcellular location is the cytoplasm. It carries out the reaction tRNA(Arg) + L-arginine + ATP = L-arginyl-tRNA(Arg) + AMP + diphosphate. This is Arginine--tRNA ligase from Shewanella frigidimarina (strain NCIMB 400).